A 346-amino-acid polypeptide reads, in one-letter code: Biotin synthase (346 aa).

Residues 38–256 (RQVQVSTLLS…IAVARIMMPT (219 aa)) enclose the Radical SAM core domain. [4Fe-4S] cluster-binding residues include cysteine 53, cysteine 57, and cysteine 60. [2Fe-2S] cluster contacts are provided by cysteine 97, cysteine 128, cysteine 188, and arginine 260.

This sequence belongs to the radical SAM superfamily. Biotin synthase family. As to quaternary structure, homodimer. [4Fe-4S] cluster is required as a cofactor. Requires [2Fe-2S] cluster as cofactor.

It carries out the reaction (4R,5S)-dethiobiotin + (sulfur carrier)-SH + 2 reduced [2Fe-2S]-[ferredoxin] + 2 S-adenosyl-L-methionine = (sulfur carrier)-H + biotin + 2 5'-deoxyadenosine + 2 L-methionine + 2 oxidized [2Fe-2S]-[ferredoxin]. The protein operates within cofactor biosynthesis; biotin biosynthesis; biotin from 7,8-diaminononanoate: step 2/2. Its function is as follows. Catalyzes the conversion of dethiobiotin (DTB) to biotin by the insertion of a sulfur atom into dethiobiotin via a radical-based mechanism. In Escherichia coli (strain K12 / DH10B), this protein is Biotin synthase.